The chain runs to 115 residues: NADH-ubiquinone oxidoreductase chain 3 (115 aa).

The next 3 helical transmembrane spans lie at L3–W23, F55–L75, and L84–Y104.

This sequence belongs to the complex I subunit 3 family. Core subunit of respiratory chain NADH dehydrogenase (Complex I) which is composed of 45 different subunits. Interacts with TMEM186. Interacts with TMEM242.

Its subcellular location is the mitochondrion inner membrane. The catalysed reaction is a ubiquinone + NADH + 5 H(+)(in) = a ubiquinol + NAD(+) + 4 H(+)(out). Functionally, core subunit of the mitochondrial membrane respiratory chain NADH dehydrogenase (Complex I) which catalyzes electron transfer from NADH through the respiratory chain, using ubiquinone as an electron acceptor. Essential for the catalytic activity of complex I. The chain is NADH-ubiquinone oxidoreductase chain 3 from Ailurus fulgens (Himalayan red panda).